Reading from the N-terminus, the 357-residue chain is Histidinol-phosphate aminotransferase (357 aa).

Lysine 218 is modified (N6-(pyridoxal phosphate)lysine).

Belongs to the class-II pyridoxal-phosphate-dependent aminotransferase family. Histidinol-phosphate aminotransferase subfamily. In terms of assembly, homodimer. The cofactor is pyridoxal 5'-phosphate.

It catalyses the reaction L-histidinol phosphate + 2-oxoglutarate = 3-(imidazol-4-yl)-2-oxopropyl phosphate + L-glutamate. Its pathway is amino-acid biosynthesis; L-histidine biosynthesis; L-histidine from 5-phospho-alpha-D-ribose 1-diphosphate: step 7/9. This chain is Histidinol-phosphate aminotransferase, found in Prosthecochloris aestuarii (strain DSM 271 / SK 413).